Reading from the N-terminus, the 284-residue chain is tRNA uridine(34) hydroxylase (284 aa).

Residues Asp-132–Tyr-226 enclose the Rhodanese domain. The active-site Cysteine persulfide intermediate is the Cys-186.

Belongs to the TrhO family.

It catalyses the reaction uridine(34) in tRNA + AH2 + O2 = 5-hydroxyuridine(34) in tRNA + A + H2O. Catalyzes oxygen-dependent 5-hydroxyuridine (ho5U) modification at position 34 in tRNAs. In Burkholderia vietnamiensis (strain G4 / LMG 22486) (Burkholderia cepacia (strain R1808)), this protein is tRNA uridine(34) hydroxylase.